Reading from the N-terminus, the 231-residue chain is Pathogenesis-related thaumatin-like protein 3.7 (231 aa).

The N-terminal stretch at 1 to 27 (MATVSDLALLLVAGLVAISLHMQEAGA) is a signal peptide. 8 disulfides stabilise this stretch: Cys36–Cys230, Cys77–Cys87, Cys92–Cys98, Cys143–Cys218, Cys148–Cys201, Cys156–Cys166, Cys170–Cys179, and Cys180–Cys188.

This sequence belongs to the thaumatin family.

May be involved in disease resistance. In Cryptomeria japonica (Japanese cedar), this protein is Pathogenesis-related thaumatin-like protein 3.7.